Reading from the N-terminus, the 558-residue chain is uncharacterized protein (558 aa).

The next 5 helical transmembrane spans lie at 15–32 (PSVTQTIIILSLVCALGL), 39–61 (IGTISLGITFVFFVGILASHFGV), 76–95 (LVIFVYALGLQVGPSFFPSL), 104–126 (LISLGLVLLTFLLCILLYYILGI), and 166–188 (MALACAVTYPLGVVGVIIALALL). RCK C-terminal domains lie at 196 to 278 (EERD…LFGK) and 286 to 370 (RPDI…ILGD). The next 5 helical transmembrane spans lie at 383 to 405 (LFGGLVLGCVFGMIPFYLPGVSM), 409 to 426 (LGLAGGPIIIGILMGAFG), 446 to 468 (FGIILYLGGLGLASGANFFDTII), 473 to 495 (LLWVGAGFLITMLPTLLVGWASI), and 533 to 555 (VVYATVYPLSMFVRIIFAQIMIL).

The protein belongs to the AAE transporter (TC 2.A.81) family.

It is found in the cell membrane. This is an uncharacterized protein from Porphyromonas gingivalis (strain ATCC BAA-308 / W83).